The sequence spans 503 residues: Long-chain-fatty-acid--CoA ligase FadD13 (503 aa).

The protein belongs to the ATP-dependent AMP-binding enzyme family. As to quaternary structure, homodimer.

It is found in the cell membrane. The enzyme catalyses a long-chain fatty acid + ATP + CoA = a long-chain fatty acyl-CoA + AMP + diphosphate. It functions in the pathway lipid metabolism; fatty acid biosynthesis. In terms of biological role, required for maintaining the appropriate mycolic acid composition and permeability of the envelope on its exposure to acidic pH. Catalyzes the activation of long-chain fatty acids as acyl-coenzyme A (acyl-CoA), which are then transferred to the multifunctional polyketide synthase (PKS) type III for further chain extension. The polypeptide is Long-chain-fatty-acid--CoA ligase FadD13 (fadD13) (Mycobacterium tuberculosis (strain CDC 1551 / Oshkosh)).